A 135-amino-acid polypeptide reads, in one-letter code: Large ribosomal subunit protein uL16c (135 aa).

Belongs to the universal ribosomal protein uL16 family. Part of the 50S ribosomal subunit.

The protein resides in the plastid. It is found in the chloroplast. This Morus indica (Mulberry) protein is Large ribosomal subunit protein uL16c.